The primary structure comprises 261 residues: Cytochrome c oxidase subunit 3 (261 aa).

The Mitochondrial matrix segment spans residues 1-15 (MTHQTHAYHMVNPSP). Residues 16 to 34 (WPLTGALSALLMTSGLIMW) form a helical membrane-spanning segment. Residues 35–40 (FHFNST) are Mitochondrial intermembrane-facing. Residues 41–66 (TLLMLGLTTNMLTMYQWWRDVVREST) form a helical membrane-spanning segment. Topologically, residues 67-72 (FQGHHT) are mitochondrial matrix. Residues 73 to 105 (PNVQKGLRYGMILFIISEVLFFTGFFWAFYHSS) form a helical membrane-spanning segment. Over 106–128 (LAPTPELGGCWPPTGIHPLNPLE) the chain is Mitochondrial intermembrane. Residues 129–152 (VPLLNTSVLLASGVSITWAHHSLM) traverse the membrane as a helical segment. The Mitochondrial matrix segment spans residues 153–155 (EGN). The helical transmembrane segment at 156-183 (RNHMLQALFITIALGVYFTLLQASEYYE) threads the bilayer. Over 184-190 (APFTISD) the chain is Mitochondrial intermembrane. A helical membrane pass occupies residues 191 to 223 (GVYGSTFFVATGFHGLHVIIGSTFLIVCFFRQL). Residues 224–232 (KFHFTSNHH) are Mitochondrial matrix-facing. Residues 233-256 (FGFEAAAWYWHFVDVVWLFLYVSI) form a helical membrane-spanning segment. Over 257–261 (YWWGS) the chain is Mitochondrial intermembrane.

This sequence belongs to the cytochrome c oxidase subunit 3 family. Component of the cytochrome c oxidase (complex IV, CIV), a multisubunit enzyme composed of 14 subunits. The complex is composed of a catalytic core of 3 subunits MT-CO1, MT-CO2 and MT-CO3, encoded in the mitochondrial DNA, and 11 supernumerary subunits COX4I, COX5A, COX5B, COX6A, COX6B, COX6C, COX7A, COX7B, COX7C, COX8 and NDUFA4, which are encoded in the nuclear genome. The complex exists as a monomer or a dimer and forms supercomplexes (SCs) in the inner mitochondrial membrane with NADH-ubiquinone oxidoreductase (complex I, CI) and ubiquinol-cytochrome c oxidoreductase (cytochrome b-c1 complex, complex III, CIII), resulting in different assemblies (supercomplex SCI(1)III(2)IV(1) and megacomplex MCI(2)III(2)IV(2)).

The protein localises to the mitochondrion inner membrane. It carries out the reaction 4 Fe(II)-[cytochrome c] + O2 + 8 H(+)(in) = 4 Fe(III)-[cytochrome c] + 2 H2O + 4 H(+)(out). In terms of biological role, component of the cytochrome c oxidase, the last enzyme in the mitochondrial electron transport chain which drives oxidative phosphorylation. The respiratory chain contains 3 multisubunit complexes succinate dehydrogenase (complex II, CII), ubiquinol-cytochrome c oxidoreductase (cytochrome b-c1 complex, complex III, CIII) and cytochrome c oxidase (complex IV, CIV), that cooperate to transfer electrons derived from NADH and succinate to molecular oxygen, creating an electrochemical gradient over the inner membrane that drives transmembrane transport and the ATP synthase. Cytochrome c oxidase is the component of the respiratory chain that catalyzes the reduction of oxygen to water. Electrons originating from reduced cytochrome c in the intermembrane space (IMS) are transferred via the dinuclear copper A center (CU(A)) of subunit 2 and heme A of subunit 1 to the active site in subunit 1, a binuclear center (BNC) formed by heme A3 and copper B (CU(B)). The BNC reduces molecular oxygen to 2 water molecules using 4 electrons from cytochrome c in the IMS and 4 protons from the mitochondrial matrix. The protein is Cytochrome c oxidase subunit 3 (MT-CO3) of Gazella cuvieri (Cuvier's gazelle).